The sequence spans 463 residues: RuvB-like 2 (463 aa).

Position 77-84 (77-84 (GQPGTGKT)) interacts with ATP.

This sequence belongs to the RuvB family. Forms homohexameric rings. Can form a dodecamer with ruvbl1 made of two stacked hexameric rings. Component of the chromatin-remodeling Ino80 complex. Component of some MLL1/MLL complex.

It localises to the nucleus. The protein resides in the dynein axonemal particle. The catalysed reaction is ATP + H2O = ADP + phosphate + H(+). In terms of biological role, has double-stranded DNA-stimulated ATPase activity. Has ATP-dependent DNA helicase (5' to 3') activity suggesting a role in nuclear processes such as recombination and transcription. Represses gene activation mediated by beta-catenin. Proposed core component of the chromatin remodeling Ino80 complex which exhibits DNA- and nucleosome-activated ATPase activity and catalyzes ATP-dependent nucleosome sliding. Involved in the endoplasmic reticulum (ER)-associated degradation (ERAD) pathway where it negatively regulates expression of ER stress response genes. May act as a regulator of embryonic heart growth. The sequence is that of RuvB-like 2 (ruvbl2) from Danio rerio (Zebrafish).